The following is a 324-amino-acid chain: CYFIP-related Rac1 interactor B (324 aa).

Residue Gly2 is the site of N-myristoyl glycine attachment. Lys74 participates in a covalent cross-link: Glycyl lysine isopeptide (Lys-Gly) (interchain with G-Cter in ubiquitin).

Belongs to the CYRI family. As to quaternary structure, interacts with RAC1 (GTP-bound form preferentially). Post-translationally, ubiquitinated at Lys-74 upon Salmonella bacterial infection. Expressed in pancreatic ducts (at protein level).

The protein localises to the membrane. It localises to the mitochondrion. In terms of biological role, negatively regulates RAC1 signaling and RAC1-driven cytoskeletal remodeling. Regulates chemotaxis, cell migration and epithelial polarization by controlling the polarity, plasticity, duration and extent of protrusions. Limits Rac1 mediated activation of the Scar/WAVE complex, focuses protrusion signals and regulates pseudopod complexity by inhibiting Scar/WAVE-induced actin polymerization. Protects against Salmonella bacterial infection. Attenuates processes such as macropinocytosis, phagocytosis and cell migration and restrict sopE-mediated bacterial entry. Also restricts infection mediated by Mycobacterium tuberculosis and Listeria monocytogenes. Involved in the regulation of mitochondrial dynamics and oxidative stress. The protein is CYFIP-related Rac1 interactor B (Cyrib) of Mus musculus (Mouse).